We begin with the raw amino-acid sequence, 416 residues long: Tyrosine aminotransferase (416 aa).

Lys-253 bears the N6-(pyridoxal phosphate)lysine mark.

The protein belongs to the class-I pyridoxal-phosphate-dependent aminotransferase family. In terms of assembly, homodimer. The cofactor is pyridoxal 5'-phosphate. In terms of processing, the N-terminus is blocked.

The protein localises to the cytoplasm. It localises to the mitochondrion. It catalyses the reaction L-tyrosine + 2-oxoglutarate = 3-(4-hydroxyphenyl)pyruvate + L-glutamate. It functions in the pathway amino-acid degradation; L-phenylalanine degradation; acetoacetate and fumarate from L-phenylalanine: step 2/6. Functionally, transaminase involved in tyrosine breakdown. Converts tyrosine to p-hydroxyphenylpyruvate. The polypeptide is Tyrosine aminotransferase (Trypanosoma cruzi).